An 882-amino-acid chain; its full sequence is Valine--tRNA ligase (882 aa).

The short motif at 42 to 52 is the 'HIGH' region element; the sequence is PNVTGKLHLGH. The 'KMSKS' region motif lies at 522 to 526; sequence KMSKS. Lys525 is an ATP binding site. A coiled-coil region spans residues 849–873; the sequence is KIEIEKKKYESYCKQYKKLLESKNN.

Belongs to the class-I aminoacyl-tRNA synthetase family. ValS type 1 subfamily. Monomer.

It localises to the cytoplasm. It carries out the reaction tRNA(Val) + L-valine + ATP = L-valyl-tRNA(Val) + AMP + diphosphate. Catalyzes the attachment of valine to tRNA(Val). As ValRS can inadvertently accommodate and process structurally similar amino acids such as threonine, to avoid such errors, it has a 'posttransfer' editing activity that hydrolyzes mischarged Thr-tRNA(Val) in a tRNA-dependent manner. This is Valine--tRNA ligase from Onion yellows phytoplasma (strain OY-M).